Consider the following 330-residue polypeptide: MAILAFQKPDKVLMLEADSRFGKFEFRPLEPGFGITVGNALRRILLSSLEGFAITTIRIDGVEHEFSSVPGVKEDVTNIILNLKQVRFKQVVEEFESEKVSITVENSSEFKAGDIGKYLTGFEVLNPELVICHLDSKATMQIDITINKGRGYVPADENREYCTDVNVIPIDSIYTPIRNVKYAVENFRVEQKTDYEKLVLEISTDGSIHPKEALKEAAKILIYHFMLFSDEKITLESNDTDGNEEFDEEVLHMRQLLKTKLVDMDLSVRALNCLKAADVETLGDLVQFNKTDLLKFRNFGKKSLTELDDLLESLNLSFGTDISKYKLDKE.

An alpha N-terminal domain (alpha-NTD) region spans residues 1–232 (MAILAFQKPD…YHFMLFSDEK (232 aa)). Positions 248 to 330 (EEVLHMRQLL…DISKYKLDKE (83 aa)) are alpha C-terminal domain (alpha-CTD).

It belongs to the RNA polymerase alpha chain family. As to quaternary structure, homodimer. The RNAP catalytic core consists of 2 alpha, 1 beta, 1 beta' and 1 omega subunit. When a sigma factor is associated with the core the holoenzyme is formed, which can initiate transcription.

It catalyses the reaction RNA(n) + a ribonucleoside 5'-triphosphate = RNA(n+1) + diphosphate. In terms of biological role, DNA-dependent RNA polymerase catalyzes the transcription of DNA into RNA using the four ribonucleoside triphosphates as substrates. The sequence is that of DNA-directed RNA polymerase subunit alpha from Bacteroides thetaiotaomicron (strain ATCC 29148 / DSM 2079 / JCM 5827 / CCUG 10774 / NCTC 10582 / VPI-5482 / E50).